A 1185-amino-acid polypeptide reads, in one-letter code: Calmodulin-binding transcription activator homolog 1 (1185 aa).

Positions 72–200 form a DNA-binding region, CG-1; the sequence is AVELFPCFKD…YLNVKTNNKI (129 aa). Disordered regions lie at residues 252 to 277 and 390 to 411; these read GVNLPTSPLPQEPSSSTSRELERRNS and KIRSGSQESPMGPPSSSSVTST. Residues 393–411 show a composition bias toward low complexity; the sequence is SGSQESPMGPPSSSSVTST. The IPT/TIG domain occupies 418–498; the sequence is EMTPSSSSLK…ISTASEFTYE (81 aa). One copy of the ANK repeat lies at 616-646; that stretch reads DGSTPLHTACKNSASRIARLIISIDSSAIDV. The IQ domain maps to 957–984; the sequence is EAAMVIQRAYRVYRARSTTRRQEDIERR. Positions 1121–1185 are disordered; that stretch reads CPQTSGDQRN…KPPYGCGTLA (65 aa). A compositionally biased stretch (basic and acidic residues) spans 1128-1147; that stretch reads QRNKRDSDGERKRDAHHDAP.

Belongs to the CAMTA family. In terms of assembly, may interact with calmodulin. As to expression, expressed broadly in the nervous system.

It localises to the nucleus. In terms of biological role, transcription factor. Positively modulates neuronal levels of the ubiquitous Ca2+ sensor calmodulin/cmd-1, probably by direct binding to the cmd-1 promoter, thereby regulating Ca2+ signaling, physiology, and behavior. In Caenorhabditis elegans, this protein is Calmodulin-binding transcription activator homolog 1.